Here is a 604-residue protein sequence, read N- to C-terminus: Aspartate--tRNA(Asp/Asn) ligase (604 aa).

Glu-174 provides a ligand contact to L-aspartate. The segment at Gln-198–Lys-201 is aspartate. An L-aspartate-binding site is contributed by Arg-220. Residues Arg-220–Glu-222 and Gln-229 each bind ATP. His-460 contributes to the L-aspartate binding site. Residue Glu-494 coordinates ATP. Position 501 (Arg-501) interacts with L-aspartate. Residue Gly-546–Arg-549 participates in ATP binding.

It belongs to the class-II aminoacyl-tRNA synthetase family. Type 1 subfamily. Homodimer.

The protein localises to the cytoplasm. The catalysed reaction is tRNA(Asx) + L-aspartate + ATP = L-aspartyl-tRNA(Asx) + AMP + diphosphate. In terms of biological role, aspartyl-tRNA synthetase with relaxed tRNA specificity since it is able to aspartylate not only its cognate tRNA(Asp) but also tRNA(Asn). Reaction proceeds in two steps: L-aspartate is first activated by ATP to form Asp-AMP and then transferred to the acceptor end of tRNA(Asp/Asn). In Paracidovorax citrulli (strain AAC00-1) (Acidovorax citrulli), this protein is Aspartate--tRNA(Asp/Asn) ligase.